Reading from the N-terminus, the 248-residue chain is 3-deoxy-manno-octulosonate cytidylyltransferase (248 aa).

Belongs to the KdsB family.

Its subcellular location is the cytoplasm. It catalyses the reaction 3-deoxy-alpha-D-manno-oct-2-ulosonate + CTP = CMP-3-deoxy-beta-D-manno-octulosonate + diphosphate. It participates in nucleotide-sugar biosynthesis; CMP-3-deoxy-D-manno-octulosonate biosynthesis; CMP-3-deoxy-D-manno-octulosonate from 3-deoxy-D-manno-octulosonate and CTP: step 1/1. It functions in the pathway bacterial outer membrane biogenesis; lipopolysaccharide biosynthesis. Its function is as follows. Activates KDO (a required 8-carbon sugar) for incorporation into bacterial lipopolysaccharide in Gram-negative bacteria. This Cronobacter sakazakii (strain ATCC BAA-894) (Enterobacter sakazakii) protein is 3-deoxy-manno-octulosonate cytidylyltransferase.